We begin with the raw amino-acid sequence, 242 residues long: Protein ABHD14A (242 aa).

A helical; Signal-anchor for type II membrane protein transmembrane segment spans residues 6–26 (AALLGLGLLLMFLLYMGLPGP). Asn-38 carries N-linked (GlcNAc...) asparagine glycosylation. Catalysis depends on charge relay system residues Ser-142, Asp-193, and His-220.

The protein belongs to the AB hydrolase superfamily. ABHD14 family.

It localises to the cytoplasm. The protein localises to the membrane. Functionally, possible role in granule neuron development. In Rattus norvegicus (Rat), this protein is Protein ABHD14A.